We begin with the raw amino-acid sequence, 160 residues long: Cytochrome b6-f complex subunit 4 (160 aa).

A run of 3 helical transmembrane segments spans residues 36–56 (LLYIFPVVILGTIACNVGLAV), 95–115 (LLGVLLMVSVPVGLLTVPFLE), and 131–151 (TVFLIGTAVALWLGIGATLPI).

Belongs to the cytochrome b family. PetD subfamily. In terms of assembly, the 4 large subunits of the cytochrome b6-f complex are cytochrome b6, subunit IV (17 kDa polypeptide, petD), cytochrome f and the Rieske protein, while the 4 small subunits are petG, petL, petM and petN. The complex functions as a dimer.

The protein localises to the plastid. The protein resides in the chloroplast thylakoid membrane. Its function is as follows. Component of the cytochrome b6-f complex, which mediates electron transfer between photosystem II (PSII) and photosystem I (PSI), cyclic electron flow around PSI, and state transitions. The protein is Cytochrome b6-f complex subunit 4 of Daucus carota (Wild carrot).